The following is a 103-amino-acid chain: MFQAHLLRGTLTLSFFLHQADFDEAAEEVKKLKTRPTDEELKELYGFYKQATVGDINIECPGMLDLKGKAKWEAWNLKKGISKEDAMNAYISKAKTMVEKYGI.

Residues histidine 18–isoleucine 103 form the ACB domain. Residues lysine 30, tyrosine 45 to lysine 49, lysine 67, lysine 71, and tyrosine 90 contribute to the an acyl-CoA site.

The protein belongs to the ACBP family. As to quaternary structure, monomer.

The protein localises to the endoplasmic reticulum. It is found in the golgi apparatus. Its function is as follows. Binds medium- and long-chain acyl-CoA esters with very high affinity and may function as an intracellular carrier of acyl-CoA esters. It is also able to displace diazepam from the benzodiazepine (BZD) recognition site located on the GABA type A receptor. It is therefore possible that this protein also acts as a neuropeptide to modulate the action of the GABA receptor. In Anas platyrhynchos (Mallard), this protein is Acyl-CoA-binding protein (DBI).